Reading from the N-terminus, the 202-residue chain is Putative 3-methyladenine DNA glycosylase (202 aa).

This sequence belongs to the DNA glycosylase MPG family.

The protein is Putative 3-methyladenine DNA glycosylase of Staphylococcus aureus (strain Mu3 / ATCC 700698).